The sequence spans 319 residues: Malate dehydrogenase (319 aa).

NAD(+) is bound by residues 10 to 15 and aspartate 34; that span reads GAGNIG. Residues arginine 83 and arginine 89 each contribute to the substrate site. Residues asparagine 96 and 119-121 contribute to the NAD(+) site; that span reads ITN. Residues asparagine 121 and arginine 152 each coordinate substrate. Residue histidine 176 is the Proton acceptor of the active site.

The protein belongs to the LDH/MDH superfamily. MDH type 3 family.

The enzyme catalyses (S)-malate + NAD(+) = oxaloacetate + NADH + H(+). Functionally, catalyzes the reversible oxidation of malate to oxaloacetate. The sequence is that of Malate dehydrogenase from Francisella tularensis subsp. tularensis (strain FSC 198).